A 209-amino-acid chain; its full sequence is High frequency lysogenization protein HflD homolog (209 aa).

This sequence belongs to the HflD family.

The protein localises to the cytoplasm. The protein resides in the cell inner membrane. The protein is High frequency lysogenization protein HflD homolog of Marinomonas sp. (strain MWYL1).